The primary structure comprises 328 residues: Ribose-phosphate pyrophosphokinase (328 aa).

ATP is bound by residues 39-41 (DGE) and 98-99 (RQ). His-132 and Asp-172 together coordinate Mg(2+). The active site involves Lys-195. D-ribose 5-phosphate contacts are provided by residues Arg-197, Asp-221, and 225-229 (DTGGT).

Belongs to the ribose-phosphate pyrophosphokinase family. Class I subfamily. As to quaternary structure, homohexamer. It depends on Mg(2+) as a cofactor.

The protein localises to the cytoplasm. It catalyses the reaction D-ribose 5-phosphate + ATP = 5-phospho-alpha-D-ribose 1-diphosphate + AMP + H(+). The protein operates within metabolic intermediate biosynthesis; 5-phospho-alpha-D-ribose 1-diphosphate biosynthesis; 5-phospho-alpha-D-ribose 1-diphosphate from D-ribose 5-phosphate (route I): step 1/1. Its function is as follows. Involved in the biosynthesis of the central metabolite phospho-alpha-D-ribosyl-1-pyrophosphate (PRPP) via the transfer of pyrophosphoryl group from ATP to 1-hydroxyl of ribose-5-phosphate (Rib-5-P). In Mycoplasma pneumoniae (strain ATCC 29342 / M129 / Subtype 1) (Mycoplasmoides pneumoniae), this protein is Ribose-phosphate pyrophosphokinase.